We begin with the raw amino-acid sequence, 1266 residues long: Rho GTPase-activating protein 29 (1266 aa).

Phosphoserine is present on residues Ser166, Ser171, Ser174, and Ser185. Residues 187–457 form the F-BAR domain; that stretch reads IELDNLLLKN…SAKLYDPGQE (271 aa). The stretch at 291–413 forms a coiled coil; that stretch reads RKNEMEKQRK…EILTQLRTLV (123 aa). Phosphoserine is present on residues Ser496, Ser516, and Ser549. Low complexity predominate over residues 538–556; the sequence is SESTGGSSESRSLDSESIS. Residues 538 to 596 form a disordered region; it reads SESTGGSSESRSLDSESISPGDFHRKLPRTPSSGTMSSADDLDEREPPSPSEAGPNSLG. The segment at 609-654 adopts a Phorbol-ester/DAG-type zinc-finger fold; sequence THKFRKLRSPTKCRDCEGIVMFPGVECEECLLVCHRKCLENLVIVC. The region spanning 668–883 is the Rho-GAP domain; that stretch reads AEFIQVAKKE…FLITYAQKIF (216 aa). Phosphoserine is present on residues Ser915, Ser951, and Ser1023. Disordered regions lie at residues 1033-1054, 1114-1153, and 1222-1248; these read AGSP…KFGK, VSTG…DSCP, and VQTS…QRPR. A compositionally biased stretch (polar residues) spans 1115 to 1127; it reads STGNNRGHSSGAA. The span at 1132–1148 shows a compositional bias: basic and acidic residues; the sequence is AHADPARSARDTSEHSS. A phosphoserine mark is found at Ser1149 and Ser1151. The interval 1263 to 1266 is interaction with PTPN13/PTPL1; the sequence is PQFV.

In terms of assembly, interacts with PTPN13/PTPL1. Interacts with RAP2A via its coiled coil domain. Interacts with RASIP1.

GTPase activator for the Rho-type GTPases by converting them to an inactive GDP-bound state. Has strong activity toward RHOA, and weaker activity toward RAC1 and CDC42. May act as a specific effector of RAP2A to regulate Rho. In concert with RASIP1, suppresses RhoA signaling and dampens ROCK and MYH9 activities in endothelial cells and plays an essential role in blood vessel tubulogenesis. This Rattus norvegicus (Rat) protein is Rho GTPase-activating protein 29 (Arhgap29).